We begin with the raw amino-acid sequence, 359 residues long: Peroxisome assembly protein 12 (359 aa).

The Peroxisomal matrix segment spans residues 1–24 (MSTTIRASQLASSISPKTEEKQPS). Residues 25-52 (VFDIIAQENLATSIRPALQHLVKYLAFF) form a helical membrane-spanning segment. Residues 53 to 56 (KPKT) are Cytoplasmic-facing. Residues 57–81 (FLSVHRNFDEYYIIFDLILQNHYLR) form a helical membrane-spanning segment. Residues 82 to 106 (NYGASFTENFYSMKRIASGTGNPPN) are Peroxisomal matrix-facing. The chain crosses the membrane as a helical span at residues 107-128 (DGRERIMSLITLVGWPYVENKL). Over 129–133 (NQLYD) the chain is Cytoplasmic. A helical membrane pass occupies residues 134 to 184 (RLKEVYECRSWSSINGMKAKCQKMFVIIWPYIKTALKAVKSALQLAYILNR). Over 185–253 (SSIHSPWLYF…ILGLPGIVSR (69 aa)) the chain is Peroxisomal matrix. The chain crosses the membrane as a helical span at residues 254-281 (LFAYGLFFVQFLDYMYNTDLAKLTKTGL). The Cytoplasmic portion of the chain corresponds to 282-359 (DGAIPSPPHK…NVQHLIRLFV (78 aa)). Zn(2+)-binding residues include cysteine 307, cysteine 310, cysteine 328, and cysteine 331. Residues 307–346 (CPICLKKRVNDTALFVSGYVFCYTCINQYVNTYNKCPVTG) form an RING-type; degenerate zinc finger.

This sequence belongs to the pex2/pex10/pex12 family. In terms of assembly, component of the PEX2-PEX10-PEX12 retrotranslocation channel.

Its subcellular location is the peroxisome membrane. The protein operates within protein modification; protein ubiquitination. Component of a retrotranslocation channel required for peroxisome organization by mediating export of the PEX5/prx-5 receptor from peroxisomes to the cytosol, thereby promoting PEX5/prx-5 recycling. The retrotranslocation channel is composed of PEX2/prx-2, PEX10/prx-10 and PEX12/prx-12; each subunit contributing transmembrane segments that coassemble into an open channel that specifically allows the passage of PEX5/prx-5 through the peroxisomal membrane. PEX12/prx-12 also regulates PEX5/prx-5 recycling by activating the E3 ubiquitin-protein ligase activity of PEX10/prx-10. When PEX5 recycling is compromised, PEX12/prx-12 stimulates PEX10-mediated polyubiquitination of PEX5/prx-5, leading to its subsequent degradation. The chain is Peroxisome assembly protein 12 (prx-12) from Caenorhabditis elegans.